We begin with the raw amino-acid sequence, 475 residues long: Aspartyl/glutamyl-tRNA(Asn/Gln) amidotransferase subunit B (475 aa).

This sequence belongs to the GatB/GatE family. GatB subfamily. Heterotrimer of A, B and C subunits.

The enzyme catalyses L-glutamyl-tRNA(Gln) + L-glutamine + ATP + H2O = L-glutaminyl-tRNA(Gln) + L-glutamate + ADP + phosphate + H(+). It carries out the reaction L-aspartyl-tRNA(Asn) + L-glutamine + ATP + H2O = L-asparaginyl-tRNA(Asn) + L-glutamate + ADP + phosphate + 2 H(+). Functionally, allows the formation of correctly charged Asn-tRNA(Asn) or Gln-tRNA(Gln) through the transamidation of misacylated Asp-tRNA(Asn) or Glu-tRNA(Gln) in organisms which lack either or both of asparaginyl-tRNA or glutaminyl-tRNA synthetases. The reaction takes place in the presence of glutamine and ATP through an activated phospho-Asp-tRNA(Asn) or phospho-Glu-tRNA(Gln). The polypeptide is Aspartyl/glutamyl-tRNA(Asn/Gln) amidotransferase subunit B (Bacillus cereus (strain ZK / E33L)).